The sequence spans 150 residues: Transcriptional regulator MraZ (150 aa).

SpoVT-AbrB domains follow at residues 9–54 (QSIH…PPEE) and 83–126 (AEEC…NKST).

This sequence belongs to the MraZ family. As to quaternary structure, forms oligomers.

The protein localises to the cytoplasm. It localises to the nucleoid. The protein is Transcriptional regulator MraZ of Syntrophobacter fumaroxidans (strain DSM 10017 / MPOB).